The sequence spans 282 residues: UPF0759 protein YunF (282 aa).

The protein belongs to the UPF0759 family.

This chain is UPF0759 protein YunF (yunF), found in Bacillus subtilis (strain 168).